Reading from the N-terminus, the 663-residue chain is Cytoplasmic dynein 1 intermediate chain (663 aa).

A compositionally biased stretch (basic and acidic residues) spans 17–37; sequence LREEKDRRRREKEIKDMEEAA. Disordered stretches follow at residues 17–52 and 75–107; these read LREEKDRRRREKEIKDMEEAAGRIGGGAGIDKDQRK and SVNSMTSDNSNTQTPDASLQATVNGQSGGKKQP. The segment covering 75–85 has biased composition (low complexity); that stretch reads SVNSMTSDNSN. Residues 86-99 show a composition bias toward polar residues; the sequence is TQTPDASLQATVNG. WD repeat units lie at residues 311 to 360, 364 to 404, 413 to 454, 463 to 503, 508 to 553, 556 to 596, and 602 to 641; these read SKNR…STPE, HCQS…RTPI, AHTH…QPQD, SKAI…SGVN, RHLG…PLYS, DNSD…EVPT, and AGAPALNRVSWTPSGLHVCIGDEAGKLYVYDVAENLAQPS.

Belongs to the dynein intermediate chain family. In terms of assembly, homodimer. The cytoplasmic dynein 1 complex consists of two catalytic heavy chains (HCs) and a number of non-catalytic subunits presented by intermediate chains (ICs), light intermediate chains (LICs) and light chains (LCs). High levels of isoform 1b, isoform 1c, isoform 3a and isoform 4 accumulate in early egg chambers and at stage 9 become concentrated at the posterior of the oocyte. Isoform 5a and isoform 5b are highly expressed in adult head and to a lesser extent in adult torso. Isoform 1a, isoform 2a and isoform 2b are found in all tissues examined, including ovaries, midgut, torso and head.

Its subcellular location is the cytoplasm. The protein localises to the cytoskeleton. The protein resides in the lysosome membrane. It localises to the nucleus membrane. In terms of biological role, acts as one of several non-catalytic accessory components of the cytoplasmic dynein 1 complex that are thought to be involved in linking dynein to cargos and to adapter proteins that regulate dynein function. Cytoplasmic dynein 1 acts as a motor for the intracellular retrograde motility of vesicles and organelles along microtubules. The intermediate chains mediate the help dynein bind to dynactin 150 kDa component. The sequence is that of Cytoplasmic dynein 1 intermediate chain (sw) from Drosophila melanogaster (Fruit fly).